The sequence spans 361 residues: Feruloyl CoA ortho-hydroxylase 2 (361 aa).

Residues 211–312 enclose the Fe2OG dioxygenase domain; it reads GSTRINLNYY…RISVPIFVSP (102 aa). Y220 serves as a coordination point for 2-oxoglutarate. Residues H235, D237, and H293 each contribute to the Fe cation site. Residues R303 and S305 each contribute to the 2-oxoglutarate site.

This sequence belongs to the iron/ascorbate-dependent oxidoreductase family. L-ascorbate serves as cofactor. Requires Fe(2+) as cofactor. Low expression in roots.

The enzyme catalyses (E)-feruloyl-CoA + 2-oxoglutarate + O2 = (E)-6-hydroxyferuloyl-CoA + succinate + CO2. It catalyses the reaction (E)-6-hydroxyferuloyl-CoA = scopoletin + CoA. Its function is as follows. 2-oxoglutarate (OG)- and Fe(II)-dependent dioxygenase (2OGD)involved in scopoletin biosynthesis. Converts feruloyl CoA into 6'-hydroxyferuloyl CoA but has no activity with ferulic acid, feruloylquinic acid, caffeic acid, caffeoyl CoA, p-coumaric acid, cinnamic acid, cinnamoyl CoA or benzoyl CoA. In Arabidopsis thaliana (Mouse-ear cress), this protein is Feruloyl CoA ortho-hydroxylase 2.